Reading from the N-terminus, the 320-residue chain is Aspartate carbamoyltransferase catalytic subunit (320 aa).

Carbamoyl phosphate-binding residues include Arg57 and Thr58. Lys85 is an L-aspartate binding site. 3 residues coordinate carbamoyl phosphate: Arg107, His141, and Gln144. 2 residues coordinate L-aspartate: Arg174 and Arg228. Positions 269 and 270 each coordinate carbamoyl phosphate.

Belongs to the aspartate/ornithine carbamoyltransferase superfamily. ATCase family. In terms of assembly, heterododecamer (2C3:3R2) of six catalytic PyrB chains organized as two trimers (C3), and six regulatory PyrI chains organized as three dimers (R2).

It carries out the reaction carbamoyl phosphate + L-aspartate = N-carbamoyl-L-aspartate + phosphate + H(+). The protein operates within pyrimidine metabolism; UMP biosynthesis via de novo pathway; (S)-dihydroorotate from bicarbonate: step 2/3. Functionally, catalyzes the condensation of carbamoyl phosphate and aspartate to form carbamoyl aspartate and inorganic phosphate, the committed step in the de novo pyrimidine nucleotide biosynthesis pathway. In Mycobacterium ulcerans (strain Agy99), this protein is Aspartate carbamoyltransferase catalytic subunit.